A 194-amino-acid chain; its full sequence is CASP-like protein Ni6 (194 aa).

The Cytoplasmic segment spans residues 1–27 (MSSMETEKGAVPTPQAPPVAPTDNKYR). A helical membrane pass occupies residues 28–48 (VVDVILRVLLLAASIASVVLM). At 49-75 (VTSKQTEIIVSPFGSRPNAAKFQNSPA) the chain is on the extracellular side. The helical transmembrane segment at 76 to 96 (FIYLVAALSVAGLYSIITALV) threads the bilayer. At 97–109 (SLSYMRKPIVPPK) the chain is on the cytoplasmic side. The chain crosses the membrane as a helical span at residues 110–130 (LFWILLIHDVLLLGIVAAATG). Residues 131–161 (TAGGVGYIGLKGNTHVRWGKIRNVYDKFCRH) are Extracellular-facing. The helical transmembrane segment at 162–182 (VGASIIVSLFAAAVLVLLVFV) threads the bilayer. Topologically, residues 183–194 (NANSLYRRIPKY) are cytoplasmic.

This sequence belongs to the Casparian strip membrane proteins (CASP) family. In terms of assembly, homodimer and heterodimers.

It localises to the cell membrane. In Beta vulgaris subsp. maritima (Sea beet), this protein is CASP-like protein Ni6 (Ni6).